A 139-amino-acid polypeptide reads, in one-letter code: Gastrula zinc finger protein XlCGF29.1 (139 aa).

5 consecutive C2H2-type zinc fingers follow at residues 6 to 28, 34 to 56, 62 to 84, 90 to 112, and 117 to 139; these read FTCTECEESFSLKSRLIAHLLIH, FDSTKCGKGFRRNQYLKEHLSTH, FVCTVCGKTYKYKHGLNTHLHSH, FPCSECRKIFSSKASLDIHLRHH, and FPCTECDKTFKQKKNLKRHQMIH.

It belongs to the krueppel C2H2-type zinc-finger protein family.

The protein resides in the nucleus. Its function is as follows. May be involved in transcriptional regulation. In Xenopus laevis (African clawed frog), this protein is Gastrula zinc finger protein XlCGF29.1.